Consider the following 201-residue polypeptide: Recombination protein RecR (201 aa).

The C4-type zinc finger occupies 60 to 75; that stretch reads CSVCGNVDTIDPCSIC. A Toprim domain is found at 83 to 178; that stretch reads ATIIVVEDIA…KVTRLAHGVP (96 aa).

Belongs to the RecR family.

Its function is as follows. May play a role in DNA repair. It seems to be involved in an RecBC-independent recombinational process of DNA repair. It may act with RecF and RecO. The sequence is that of Recombination protein RecR from Bartonella henselae (strain ATCC 49882 / DSM 28221 / CCUG 30454 / Houston 1) (Rochalimaea henselae).